Consider the following 91-residue polypeptide: Small ribosomal subunit protein uS19 (91 aa).

This sequence belongs to the universal ribosomal protein uS19 family.

Its function is as follows. Protein S19 forms a complex with S13 that binds strongly to the 16S ribosomal RNA. The polypeptide is Small ribosomal subunit protein uS19 (Prochlorococcus marinus (strain MIT 9515)).